The chain runs to 515 residues: Probable malate:quinone oxidoreductase (515 aa).

Belongs to the MQO family. Requires FAD as cofactor.

It carries out the reaction (S)-malate + a quinone = a quinol + oxaloacetate. It functions in the pathway carbohydrate metabolism; tricarboxylic acid cycle; oxaloacetate from (S)-malate (quinone route): step 1/1. In Blochmanniella pennsylvanica (strain BPEN), this protein is Probable malate:quinone oxidoreductase.